Here is a 135-residue protein sequence, read N- to C-terminus: Transcriptional regulator HosA (135 aa).

Residues R4–N134 form the HTH marR-type domain. Positions Q48–N71 form a DNA-binding region, H-T-H motif.

Functionally, involved in the temperature-dependent positive control of flagellum-driven swimming motility and cellular aggregation. Regulates fliC expression by directly interacting with fliC promoter. This is Transcriptional regulator HosA (hosA) from Escherichia coli O127:H6 (strain E2348/69 / EPEC).